The following is a 312-amino-acid chain: Glyoxylate/hydroxypyruvate reductase A (312 aa).

Arginine 227 is an active-site residue. Catalysis depends on histidine 275, which acts as the Proton donor.

It belongs to the D-isomer specific 2-hydroxyacid dehydrogenase family. GhrA subfamily.

It is found in the cytoplasm. It carries out the reaction glycolate + NADP(+) = glyoxylate + NADPH + H(+). The enzyme catalyses (R)-glycerate + NAD(+) = 3-hydroxypyruvate + NADH + H(+). The catalysed reaction is (R)-glycerate + NADP(+) = 3-hydroxypyruvate + NADPH + H(+). Functionally, catalyzes the NADPH-dependent reduction of glyoxylate and hydroxypyruvate into glycolate and glycerate, respectively. The protein is Glyoxylate/hydroxypyruvate reductase A of Klebsiella pneumoniae (strain 342).